A 71-amino-acid chain; its full sequence is Omega-conotoxin SO-3 (71 aa).

A signal peptide spans 1–22 (MKLTCMVIVAVLLLTACQLITA). A propeptide spanning residues 23-45 (DDSRGTQKHRTLRSKTKLSMSTR) is cleaved from the precursor. Disulfide bonds link C46–C61, C53–C65, and C60–C70. C70 is modified (cysteine amide).

This sequence belongs to the conotoxin O1 superfamily. In terms of tissue distribution, expressed by the venom duct.

Its subcellular location is the secreted. Omega-conotoxins act at presynaptic membranes, they bind and block voltage-gated calcium channels (Cav). This peptide selectively targets Cav2.2/CACNA1B (IC(50)=160 nM) voltage-gated calcium channels. When tested in mammals, this toxin displays an analgesic potency similar to MVIIA in a range of acute and chronic pain models in rodents, but has less adverse effects (tremor, diminution of spontaneous locomotor activity and bad coordinated locomotion) compared with identical dosages of MVIIA injected intrathecally. This Conus striatus (Striated cone) protein is Omega-conotoxin SO-3.